Consider the following 593-residue polypeptide: Metal-response element-binding transcription factor 2 (593 aa).

The interval Met-1–Asp-35 is disordered. Residues Val-12–Gln-22 are compositionally biased toward basic residues. A compositionally biased stretch (polar residues) spans Lys-23–Ser-32. The residue at position 24 (Thr-24) is a Phosphothreonine. Residues Cys-44–Gly-101 form the Tudor domain. PHD-type zinc fingers lie at residues Glu-102–Ala-157 and Gln-201–Gly-255. A Glycyl lysine isopeptide (Lys-Gly) (interchain with G-Cter in SUMO2) cross-link involves residue Lys-360. Over residues Lys-360–Ile-374 the composition is skewed to basic and acidic residues. Disordered stretches follow at residues Lys-360–Arg-411 and Lys-424–Gly-486. Residues Thr-445–Val-454 show a composition bias toward polar residues. Phosphoserine is present on Ser-452. Positions Ala-459–Ser-471 are enriched in low complexity. Lys-522 is covalently cross-linked (Glycyl lysine isopeptide (Lys-Gly) (interchain with G-Cter in SUMO2)).

Belongs to the Polycomblike family. As to quaternary structure, associates with the PRC2 complex, which consists of the core components EED, EZH1 or EZH2, SUZ12, and RBBP4, and various combinations of accessory subunits including AEBP2, JARID2, PHF19, MTF2 and EPOP. Forms a dimeric PRC2.1 (class 1, PRC-PCL) complex consisting of at least SUZ12, RBBP4, and PHF19 or MTF2; PHF19 and MTF2 stabilize the dimeric structure which enhances PRC2 interaction with chromatin.

The protein localises to the nucleus. Its function is as follows. Polycomb group (PcG) protein that specifically binds histone H3 trimethylated at 'Lys-36' (H3K36me3) and recruits the PRC2 complex, thus enhancing PRC2 H3K27me3 methylation activity. Regulates the transcriptional networks during embryonic stem cell self-renewal and differentiation. Promotes recruitment of the PRC2 complex to the inactive X chromosome in differentiating XX ES cells and PRC2 recruitment to target genes in undifferentiated ES cells. Required to repress Hox genes by enhancing H3K27me3 methylation of the PRC2 complex. In some conditions may act as an inhibitor of PRC2 activity: able to activate the CDKN2A gene and promote cellular senescence by suppressing the catalytic activity of the PRC2 complex locally. Binds to the metal-regulating-element (MRE) of MT1A gene promoter. The protein is Metal-response element-binding transcription factor 2 (MTF2) of Homo sapiens (Human).